We begin with the raw amino-acid sequence, 41 residues long: Photosystem I reaction center subunit IX (41 aa).

The helical transmembrane segment at 7–27 threads the bilayer; sequence YLSTAPVLATLWFGFLAGLLI.

This sequence belongs to the PsaJ family.

The protein localises to the plastid. The protein resides in the chloroplast thylakoid membrane. In terms of biological role, may help in the organization of the PsaE and PsaF subunits. This is Photosystem I reaction center subunit IX from Physcomitrium patens (Spreading-leaved earth moss).